The chain runs to 413 residues: MDHLKRQDEKVFAAIEAELGRQRSKIELIASENFVSEAVMEAQGSVLTNKYAEGYPGKRYYGGCEHVDVVEDIARDRVKEIFGAEHVNVQPHSGAQANMAVYFTILEQGDTVLGMNLSHGGHLTHGSPVNFSGVQYNFVEYGVDAESHRINYDDVLAKAKEHKPKLIVAGASAYPRVIDFKRFREIADEVGAYLMVDMAHIAGLVAAGLHPNPVPHAHFVTTTTHKTLRGPRGGMILCEEQFAKQIDKSIFPGIQGGPLMHVIAAKAVAFGEALQDDFKTYAQNIINNANRLAEGLQKEGLTLVSGGTDNHLILIDVRNLEITGKVAEHVLDEVGITVNKNTIPFETASPFVTSGVRIGTAAVTSRGFGLEDMDEIASLIAYTLKNHENEAALEEARKRVEALTSKFPMYTDL.

(6S)-5,6,7,8-tetrahydrofolate is bound by residues L117 and 121-123 (GHL). K226 carries the N6-(pyridoxal phosphate)lysine modification. (6S)-5,6,7,8-tetrahydrofolate is bound by residues E239 and 349–351 (SPF).

This sequence belongs to the SHMT family. In terms of assembly, homodimer. Pyridoxal 5'-phosphate is required as a cofactor.

The protein resides in the cytoplasm. It catalyses the reaction (6R)-5,10-methylene-5,6,7,8-tetrahydrofolate + glycine + H2O = (6S)-5,6,7,8-tetrahydrofolate + L-serine. Its pathway is one-carbon metabolism; tetrahydrofolate interconversion. It functions in the pathway amino-acid biosynthesis; glycine biosynthesis; glycine from L-serine: step 1/1. Functionally, catalyzes the reversible interconversion of serine and glycine with tetrahydrofolate (THF) serving as the one-carbon carrier. This reaction serves as the major source of one-carbon groups required for the biosynthesis of purines, thymidylate, methionine, and other important biomolecules. Also exhibits THF-independent aldolase activity toward beta-hydroxyamino acids, producing glycine and aldehydes, via a retro-aldol mechanism. This Bacillus cereus (strain AH820) protein is Serine hydroxymethyltransferase.